We begin with the raw amino-acid sequence, 45 residues long: Small polypeptide DEVIL 2 (45 aa).

The tract at residues 14-45 (SQSRRLGKYLKEQKGRIYIIRRCVMMLLCSHD) is required for DVL/RTFL small polypeptide activity. Residues 17-33 (RRLGKYLKEQKGRIYII) traverse the membrane as a helical segment.

The protein belongs to the DVL/RTFL small polypeptides family. Mostly expressed in stems and, to a lower extent, in roots and leaves.

It is found in the cell membrane. Its function is as follows. Small polypeptide acting as a regulatory molecule which coordinates cellular responses required for differentiation, growth and development, including leaves shape, pedicule elongation, inflorescence organization and fruit maturation, probably by restricting polar cell proliferation in lateral organs and coordinating socket cell recruitment and differentiation at trichome sites. The chain is Small polypeptide DEVIL 2 from Arabidopsis thaliana (Mouse-ear cress).